A 586-amino-acid chain; its full sequence is Acyl-coenzyme A synthetase ACSM3, mitochondrial (586 aa).

Residues 1-27 (MLACVTMKMLRHAKCFQRLAIFGSVRA) constitute a mitochondrion transit peptide. An N6-succinyllysine mark is found at Lys-73 and Lys-106. The residue at position 157 (Lys-157) is an N6-acetyllysine. ATP-binding positions include 235-243 (TSGTSGYPK), 374-379 (EGYGQT), Asp-461, Arg-476, and Lys-572.

The protein belongs to the ATP-dependent AMP-binding enzyme family. It depends on Mg(2+) as a cofactor. Requires Mn(2+) as cofactor.

The protein localises to the mitochondrion. The protein resides in the mitochondrion matrix. The enzyme catalyses a medium-chain fatty acid + ATP + CoA = a medium-chain fatty acyl-CoA + AMP + diphosphate. It catalyses the reaction propanoate + ATP + CoA = propanoyl-CoA + AMP + diphosphate. It carries out the reaction butanoate + ATP + CoA = butanoyl-CoA + AMP + diphosphate. The catalysed reaction is 2-methylpropanoate + ATP + CoA = 2-methylpropanoyl-CoA + AMP + diphosphate. The enzyme catalyses 2-methylbutanoate + ATP + CoA = 2-methylbutanoyl-CoA + AMP + diphosphate. It catalyses the reaction octanoate + ATP + CoA = octanoyl-CoA + AMP + diphosphate. Catalyzes the activation of fatty acids by CoA to produce an acyl-CoA, the first step in fatty acid metabolism. Capable of activating medium-chain fatty acids with a preference for isobutyrate among fatty acids with 2-6 carbon atoms. The sequence is that of Acyl-coenzyme A synthetase ACSM3, mitochondrial (ACSM3) from Pongo abelii (Sumatran orangutan).